A 359-amino-acid chain; its full sequence is NAC transcription factor 47 (359 aa).

The region spanning 10 to 186 (LPPGFRFHPT…DWVLCRIYKK (177 aa)) is the NAC domain. Residues 112-192 (IGIKKALVFY…IYKKSHASLS (81 aa)) mediate DNA binding. 2 disordered regions span residues 147–166 (KRINSSRSGGSEVNNNFGDR) and 200–226 (TSNQEHEENDNEPFVDRGTFLPNLQND). A compositionally biased stretch (polar residues) spans 148 to 165 (RINSSRSGGSEVNNNFGD).

The protein resides in the nucleus. In terms of biological role, transcription factor that binds to the promoter of ACO5, an ACC oxidase involved in ethylene biosynthesis. Mediates waterlogging-induced hyponastic leaf movement, and cell expansion in abaxial cells of the basal petiole region, by directly regulating the expression of ACO5. Required for normal seed development and morphology. The polypeptide is NAC transcription factor 47 (Arabidopsis thaliana (Mouse-ear cress)).